Consider the following 445-residue polypeptide: Histamine H3 receptor (445 aa).

The Extracellular portion of the chain corresponds to methionine 1 to alanine 39. Asparagine 11 carries N-linked (GlcNAc...) asparagine glycosylation. The helical transmembrane segment at leucine 40–valine 60 threads the bilayer. At alanine 61–asparagine 70 the chain is on the cytoplasmic side. A helical membrane pass occupies residues phenylalanine 71–tyrosine 91. At valine 92–lysine 108 the chain is on the extracellular side. Cysteine 107 and cysteine 188 are disulfide-bonded. Residues leucine 109 to serine 129 form a helical membrane-spanning segment. Residues tyrosine 130–methionine 156 lie on the Cytoplasmic side of the membrane. The chain crosses the membrane as a helical span at residues alanine 157–leucine 177. Over serine 178–tryptophan 196 the chain is Extracellular. The helical transmembrane segment at tyrosine 197–phenylalanine 217 threads the bilayer. Residues asparagine 218–serine 359 lie on the Cytoplasmic side of the membrane. Disordered stretches follow at residues aspartate 234–tryptophan 259 and alanine 286–arginine 336. The segment covering proline 241 to proline 256 has biased composition (pro residues). Residues alanine 290–alanine 299 are compositionally biased toward gly residues. The segment covering alanine 300–arginine 312 has biased composition (low complexity). A helical transmembrane segment spans residues leucine 360 to isoleucine 380. Residues arginine 381–threonine 396 lie on the Extracellular side of the membrane. A helical transmembrane segment spans residues serine 397–tyrosine 417. The Cytoplasmic segment spans residues serine 418–lysine 445. At serine 439 the chain carries Phosphoserine.

Belongs to the G-protein coupled receptor 1 family. Expressed abundantly in brain, most notably throughout the thalamus, the ventromedial hypothalamus and the caudate nucleus. Isoform 1 is largely predominant in all tissues.

Its subcellular location is the cell membrane. Its function is as follows. The H3 subclass of histamine receptors could mediate the histamine signals in CNS and peripheral nervous system. Signals through the inhibition of adenylate cyclase and displays high constitutive activity (spontaneous activity in the absence of agonist). This Rattus norvegicus (Rat) protein is Histamine H3 receptor (Hrh3).